Here is a 337-residue protein sequence, read N- to C-terminus: MQSIPIKNVGTNRLVDTFQREYYYLRLSVTDVCNFKCTYCLPSGYQPPVQKESFLSLDEIRRIVGAFAAMGTEKVRLTGGEPTLRKDFLAIVETISALEGIKKVALTTNGYRMEKDVERWKKAGVSSINVSVDSLDPRQFYSITGENKFHQVMKGIERAFEIGYEKIKVNSVLMKNLNDQEFDRFKNWVKDKPIQMRFIELMQTGEMDQFFNRYHLSGQILAEKLLKEGWILRQKDRTDGPAKVFSHPDYLGEIGLIMPYEKNFCASCNRLRVSAKGKLHLCLFGEEGVDLRDLLVSDEQQVILQSRLYAALQGKREHHLLAQGNSGIRTNLASIGG.

The Radical SAM core domain maps to 17–242 (TFQREYYYLR…RQKDRTDGPA (226 aa)). Arginine 26 is a GTP binding site. [4Fe-4S] cluster contacts are provided by cysteine 33 and cysteine 37. Tyrosine 39 lines the S-adenosyl-L-methionine pocket. A [4Fe-4S] cluster-binding site is contributed by cysteine 40. Arginine 76 is a GTP binding site. Residue glycine 80 coordinates S-adenosyl-L-methionine. Threonine 107 serves as a coordination point for GTP. Residue serine 131 coordinates S-adenosyl-L-methionine. Position 168 (lysine 168) interacts with GTP. Methionine 202 contacts S-adenosyl-L-methionine. 2 residues coordinate [4Fe-4S] cluster: cysteine 265 and cysteine 268. 270-272 (RLR) serves as a coordination point for GTP. Position 282 (cysteine 282) interacts with [4Fe-4S] cluster.

This sequence belongs to the radical SAM superfamily. MoaA family. In terms of assembly, monomer and homodimer. [4Fe-4S] cluster serves as cofactor.

It carries out the reaction GTP + AH2 + S-adenosyl-L-methionine = (8S)-3',8-cyclo-7,8-dihydroguanosine 5'-triphosphate + 5'-deoxyadenosine + L-methionine + A + H(+). It participates in cofactor biosynthesis; molybdopterin biosynthesis. Catalyzes the cyclization of GTP to (8S)-3',8-cyclo-7,8-dihydroguanosine 5'-triphosphate. The sequence is that of GTP 3',8-cyclase from Mannheimia succiniciproducens (strain KCTC 0769BP / MBEL55E).